The primary structure comprises 325 residues: Holliday junction branch migration complex subunit RuvB (325 aa).

The interval 1–181 (MENRLINPVE…FGIVQRLEFY (181 aa)) is large ATPase domain (RuvB-L). Residues I20, R21, G62, K65, T66, T67, 128-130 (EDF), R171, Y181, and R218 contribute to the ATP site. Residue T66 participates in Mg(2+) binding. The small ATPAse domain (RuvB-S) stretch occupies residues 182 to 252 (NIEDLTTIVS…IADSALDMLA (71 aa)). The tract at residues 255-325 (RRGLDHLDRR…VLTQMAIDQL (71 aa)) is head domain (RuvB-H). Residues R291, R310, and R315 each contribute to the DNA site.

The protein belongs to the RuvB family. In terms of assembly, homohexamer. Forms an RuvA(8)-RuvB(12)-Holliday junction (HJ) complex. HJ DNA is sandwiched between 2 RuvA tetramers; dsDNA enters through RuvA and exits via RuvB. An RuvB hexamer assembles on each DNA strand where it exits the tetramer. Each RuvB hexamer is contacted by two RuvA subunits (via domain III) on 2 adjacent RuvB subunits; this complex drives branch migration. In the full resolvosome a probable DNA-RuvA(4)-RuvB(12)-RuvC(2) complex forms which resolves the HJ.

The protein localises to the cytoplasm. The catalysed reaction is ATP + H2O = ADP + phosphate + H(+). Its function is as follows. The RuvA-RuvB-RuvC complex processes Holliday junction (HJ) DNA during genetic recombination and DNA repair, while the RuvA-RuvB complex plays an important role in the rescue of blocked DNA replication forks via replication fork reversal (RFR). RuvA specifically binds to HJ cruciform DNA, conferring on it an open structure. The RuvB hexamer acts as an ATP-dependent pump, pulling dsDNA into and through the RuvAB complex. RuvB forms 2 homohexamers on either side of HJ DNA bound by 1 or 2 RuvA tetramers; 4 subunits per hexamer contact DNA at a time. Coordinated motions by a converter formed by DNA-disengaged RuvB subunits stimulates ATP hydrolysis and nucleotide exchange. Immobilization of the converter enables RuvB to convert the ATP-contained energy into a lever motion, pulling 2 nucleotides of DNA out of the RuvA tetramer per ATP hydrolyzed, thus driving DNA branch migration. The RuvB motors rotate together with the DNA substrate, which together with the progressing nucleotide cycle form the mechanistic basis for DNA recombination by continuous HJ branch migration. Branch migration allows RuvC to scan DNA until it finds its consensus sequence, where it cleaves and resolves cruciform DNA. The sequence is that of Holliday junction branch migration complex subunit RuvB from Psychrobacter sp. (strain PRwf-1).